The primary structure comprises 280 residues: 4-deoxy-L-threo-5-hexosulose-uronate ketol-isomerase (280 aa).

4 residues coordinate Zn(2+): His198, His200, Glu205, and His247.

Belongs to the KduI family. The cofactor is Zn(2+).

The catalysed reaction is 5-dehydro-4-deoxy-D-glucuronate = 3-deoxy-D-glycero-2,5-hexodiulosonate. It participates in glycan metabolism; pectin degradation; 2-dehydro-3-deoxy-D-gluconate from pectin: step 4/5. Catalyzes the isomerization of 5-dehydro-4-deoxy-D-glucuronate to 3-deoxy-D-glycero-2,5-hexodiulosonate. The sequence is that of 4-deoxy-L-threo-5-hexosulose-uronate ketol-isomerase from Bacteroides fragilis (strain YCH46).